We begin with the raw amino-acid sequence, 289 residues long: Elongation factor Ts (289 aa).

Positions 82–85 (TDFL) are involved in Mg(2+) ion dislocation from EF-Tu.

This sequence belongs to the EF-Ts family.

The protein localises to the cytoplasm. Associates with the EF-Tu.GDP complex and induces the exchange of GDP to GTP. It remains bound to the aminoacyl-tRNA.EF-Tu.GTP complex up to the GTP hydrolysis stage on the ribosome. This chain is Elongation factor Ts, found in Pseudomonas paraeruginosa (strain DSM 24068 / PA7) (Pseudomonas aeruginosa (strain PA7)).